Consider the following 293-residue polypeptide: Probable E3 ubiquitin-protein ligase RNF144A-A (293 aa).

A TRIAD supradomain region spans residues 16–237; sequence PLVSCKLCLG…YDKGPCRNKL (222 aa). Residues cysteine 20, cysteine 23, cysteine 43, cysteine 46, cysteine 111, cysteine 116, cysteine 135, cysteine 138, cysteine 143, cysteine 146, histidine 151, cysteine 156, cysteine 186, and cysteine 189 each contribute to the Zn(2+) site. An RING-type 1 zinc finger spans residues 20 to 70; sequence CKLCLGEFPLEQMTTITQCQCVFCTMCLKQYVELLIKEGFETAISCPDSAC. The IBR-type zinc-finger motif lies at 91–156; that stretch reads QRYRKLQFEK…KASWHPDQDC (66 aa). The RING-type 2; atypical zinc finger occupies 186-215; that stretch reads CPKCKVYIERDEGCAQMMCKNCKHAFCWYC. Cysteine 199 is an active-site residue. Residues cysteine 204, cysteine 207, cysteine 212, cysteine 215, histidine 227, and cysteine 233 each coordinate Zn(2+). A helical transmembrane segment spans residues 251-271; the sequence is VVGIFAGFGLLLLVASPFLLL.

This sequence belongs to the RBR family. RNF144 subfamily.

Its subcellular location is the membrane. The catalysed reaction is [E2 ubiquitin-conjugating enzyme]-S-ubiquitinyl-L-cysteine + [acceptor protein]-L-lysine = [E2 ubiquitin-conjugating enzyme]-L-cysteine + [acceptor protein]-N(6)-ubiquitinyl-L-lysine.. Its pathway is protein modification; protein ubiquitination. Its function is as follows. E3 ubiquitin-protein ligase which accepts ubiquitin from E2 ubiquitin-conjugating enzymes ube2l3 and ube2l6 in the form of a thioester and then directly transfers the ubiquitin to targeted substrates. The polypeptide is Probable E3 ubiquitin-protein ligase RNF144A-A (rnf144aa) (Danio rerio (Zebrafish)).